Here is a 177-residue protein sequence, read N- to C-terminus: Adenine phosphoribosyltransferase (177 aa).

Belongs to the purine/pyrimidine phosphoribosyltransferase family. Homodimer.

The protein localises to the cytoplasm. It catalyses the reaction AMP + diphosphate = 5-phospho-alpha-D-ribose 1-diphosphate + adenine. Its pathway is purine metabolism; AMP biosynthesis via salvage pathway; AMP from adenine: step 1/1. Functionally, catalyzes a salvage reaction resulting in the formation of AMP, that is energically less costly than de novo synthesis. The polypeptide is Adenine phosphoribosyltransferase (Chlorobium phaeobacteroides (strain DSM 266 / SMG 266 / 2430)).